Here is a 451-residue protein sequence, read N- to C-terminus: Glucose-6-phosphate isomerase (451 aa).

Catalysis depends on E291, which acts as the Proton donor. Active-site residues include H312 and K426.

Belongs to the GPI family.

It localises to the cytoplasm. The catalysed reaction is alpha-D-glucose 6-phosphate = beta-D-fructose 6-phosphate. The protein operates within carbohydrate biosynthesis; gluconeogenesis. It functions in the pathway carbohydrate degradation; glycolysis; D-glyceraldehyde 3-phosphate and glycerone phosphate from D-glucose: step 2/4. Functionally, catalyzes the reversible isomerization of glucose-6-phosphate to fructose-6-phosphate. The sequence is that of Glucose-6-phosphate isomerase from Thermoanaerobacter sp. (strain X514).